Reading from the N-terminus, the 354-residue chain is Uroporphyrinogen decarboxylase (354 aa).

Residues R28–R32, D78, Y155, S210, and H325 each bind substrate.

Belongs to the uroporphyrinogen decarboxylase family. As to quaternary structure, homodimer.

The protein resides in the cytoplasm. The catalysed reaction is uroporphyrinogen III + 4 H(+) = coproporphyrinogen III + 4 CO2. The protein operates within porphyrin-containing compound metabolism; protoporphyrin-IX biosynthesis; coproporphyrinogen-III from 5-aminolevulinate: step 4/4. Catalyzes the decarboxylation of four acetate groups of uroporphyrinogen-III to yield coproporphyrinogen-III. This is Uroporphyrinogen decarboxylase from Trichodesmium erythraeum (strain IMS101).